The following is a 621-amino-acid chain: Chaperone protein HscA homolog (621 aa).

The protein belongs to the heat shock protein 70 family.

In terms of biological role, chaperone involved in the maturation of iron-sulfur cluster-containing proteins. Has a low intrinsic ATPase activity which is markedly stimulated by HscB. The chain is Chaperone protein HscA homolog from Ralstonia nicotianae (strain ATCC BAA-1114 / GMI1000) (Ralstonia solanacearum).